We begin with the raw amino-acid sequence, 110 residues long: Small ribosomal subunit protein eS25 (110 aa).

Positions 1–38 (MGGKKKPTLSQLAKKAEKEKAQQAQKAKKEVKKEETPA) are disordered. The span at 14 to 38 (KKAEKEKAQQAQKAKKEVKKEETPA) shows a compositional bias: basic and acidic residues.

It belongs to the eukaryotic ribosomal protein eS25 family.

The chain is Small ribosomal subunit protein eS25 (rps25e) from Pyrobaculum aerophilum (strain ATCC 51768 / DSM 7523 / JCM 9630 / CIP 104966 / NBRC 100827 / IM2).